Reading from the N-terminus, the 328-residue chain is MQGSVTEFLKPRLVDIEQISSTHAKVILEPLERGFGHTLGNALRRILLSSMPGCAVTEVEIDGVLHEYSSKEGVQEDILEVLLNLKGLAVKVQNKDDVILILNKSGIGPVVAADITHDGNVEIVNPDHVICHLTDENASISMRIRVQRGRGYVPASSRTHTQEERPIGRLLVDACYSPVERIAYNVEAARVEQRTDLDKLVIELETNGALEPEEAIRRAATILAEQLDAFVDLRDVRQPEIKEEKPEFDPILLRPVDDLELTVRSANCLKAETIHYIGDLVQRTEVELLKTPNLGKKSLTEIKDVLASRGLSLGMRLENWPPASIAED.

Residues 1-234 are alpha N-terminal domain (alpha-NTD); that stretch reads MQGSVTEFLK…EQLDAFVDLR (234 aa). Residues 248-328 form an alpha C-terminal domain (alpha-CTD) region; it reads FDPILLRPVD…NWPPASIAED (81 aa).

Belongs to the RNA polymerase alpha chain family. As to quaternary structure, homodimer. The RNAP catalytic core consists of 2 alpha, 1 beta, 1 beta' and 1 omega subunit. When a sigma factor is associated with the core the holoenzyme is formed, which can initiate transcription.

The enzyme catalyses RNA(n) + a ribonucleoside 5'-triphosphate = RNA(n+1) + diphosphate. DNA-dependent RNA polymerase catalyzes the transcription of DNA into RNA using the four ribonucleoside triphosphates as substrates. The sequence is that of DNA-directed RNA polymerase subunit alpha from Haemophilus influenzae (strain PittEE).